A 212-amino-acid chain; its full sequence is Thymidine kinase (212 aa).

Residues 16-23 (GPMFSGKS) and 99-102 (DEAQ) contribute to the ATP site. Glu-100 functions as the Proton acceptor in the catalytic mechanism.

It belongs to the thymidine kinase family. Homotetramer.

The protein localises to the cytoplasm. The catalysed reaction is thymidine + ATP = dTMP + ADP + H(+). The sequence is that of Thymidine kinase from Deinococcus radiodurans (strain ATCC 13939 / DSM 20539 / JCM 16871 / CCUG 27074 / LMG 4051 / NBRC 15346 / NCIMB 9279 / VKM B-1422 / R1).